The primary structure comprises 230 residues: Orotidine 5'-phosphate decarboxylase (230 aa).

Residues D10, K32, 59–68 (DLKLHDIPNT), T118, R179, Q188, G208, and R209 contribute to the substrate site. The active-site Proton donor is the K61.

The protein belongs to the OMP decarboxylase family. Type 1 subfamily. In terms of assembly, homodimer.

It carries out the reaction orotidine 5'-phosphate + H(+) = UMP + CO2. It functions in the pathway pyrimidine metabolism; UMP biosynthesis via de novo pathway; UMP from orotate: step 2/2. Functionally, catalyzes the decarboxylation of orotidine 5'-monophosphate (OMP) to uridine 5'-monophosphate (UMP). The polypeptide is Orotidine 5'-phosphate decarboxylase (Opitutus terrae (strain DSM 11246 / JCM 15787 / PB90-1)).